Here is a 148-residue protein sequence, read N- to C-terminus: uncharacterized protein (148 aa).

The HTH asnC-type domain maps to Leu-4–Met-65. Positions Tyr-23–Asp-42 form a DNA-binding region, H-T-H motif.

This is an uncharacterized protein from Pyrococcus horikoshii (strain ATCC 700860 / DSM 12428 / JCM 9974 / NBRC 100139 / OT-3).